A 269-amino-acid polypeptide reads, in one-letter code: Probable membrane transporter protein YfcA (269 aa).

The Periplasmic segment spans residues 1–7 (METFNSL). A helical membrane pass occupies residues 8–28 (FMVSPLLLGVLFFVAMLAGFI). The Cytoplasmic portion of the chain corresponds to 29-30 (DS). Residues 31–51 (IAGGGGLLTIPALMAAGMSPA) traverse the membrane as a helical segment. Over 52–84 (NALATNKLQACGGSISATIYFIRRKVVSLSDQK) the chain is Periplasmic. Residues 85–105 (LNIAMTFVGSMSGALLVQYVQ) traverse the membrane as a helical segment. The Cytoplasmic portion of the chain corresponds to 106–111 (ADVLRQ). A helical transmembrane segment spans residues 112-132 (ILPILVICIGLYFLLMPKLGE). Topologically, residues 133-156 (EDRQRRMYGLPFALIAGGCVGFYD) are periplasmic. A helical transmembrane segment spans residues 157–177 (GFFGPAAGSFYALAFVTLCGF). The Cytoplasmic portion of the chain corresponds to 178 to 197 (NLAKATAHAKLLNATSNIGG). The chain crosses the membrane as a helical span at residues 198–218 (LLLFILGGKVIWATGFVMLVG). Residues 219 to 269 (QFLGARMGSRLVLSKGQKLIRPMIVIVSAVMSAKLLYDSHGQEILHWLGMN) are Periplasmic-facing.

Belongs to the 4-toluene sulfonate uptake permease (TSUP) (TC 2.A.102) family.

The protein localises to the cell inner membrane. The chain is Probable membrane transporter protein YfcA (yfcA) from Escherichia coli O157:H7.